Reading from the N-terminus, the 1218-residue chain is NACHT, LRR and PYD domains-containing protein 1a allele 1 (1218 aa).

The interval methionine 1–asparagine 61 is disordered. Positions lysine 7–threonine 29 are enriched in polar residues. One can recognise an NACHT domain in the interval glutamine 175–leucine 484. Glycine 181–serine 188 lines the ATP pocket. 3 LRR repeats span residues lysine 343–cysteine 364, asparagine 673–cysteine 693, and arginine 730–cysteine 750. The span at threonine 799–lysine 815 shows a compositional bias: polar residues. A disordered region spans residues threonine 799–valine 842. The tract at residues phenylalanine 835–phenylalanine 968 is ZU5. The FIIND domain maps to phenylalanine 835 to serine 1118. Residues serine 969 to serine 1118 are UPA. In terms of domain architecture, CARD spans aspartate 1122 to serine 1211.

Belongs to the NLRP family. In terms of assembly, interacts (via LRR repeats) with BCL2 and BCL2L1 (via the loop between motifs BH4 and BH3). Interacts with NOD2; this interaction is enhanced in the presence of muramyl dipeptide (MDP) and increases IL1B release. Interacts with EIF2AK2/PKR; this interaction requires EIF2AK2 activity, is accompanied by EIF2AK2 autophosphorylation and promotes inflammasome assembly in response to danger-associated signals. Interacts with MEFV; this interaction targets Nlrp1a to degradation by autophagy, hence preventing excessive IL1B- and IL18-mediated inflammation. Interacts with DPP9; leading to inhibit activation of the inflammasome. DPP9 acts via formation of a ternary complex, composed of a DPP9 homodimer, one full-length NLRP1 protein, and one cleaved C-terminus of Nlrp1a (NACHT, LRR and PYD domains-containing protein 1a, C-terminus). Interacts with DPP8; leading to inhibit activation of the inflammasome, probably via formation of a ternary complex with DPP8. Interacts with the C-terminal part of Nlrp1a (NACHT, LRR and PYD domains-containing protein 1a, C-terminus) in absence of pathogens and other damage-associated signals. As to quaternary structure, interacts with the N-terminal part of Nlrp1a (NACHT, LRR and PYD domains-containing protein 1a, N-terminus) in absence of pathogens and other damage-associated signals. Homomultimer; forms the Nlrp1a inflammasome polymeric complex, a filament composed of homopolymers of this form in response to pathogens and other damage-associated signals. The Nlrp1a inflammasome polymeric complex directly recruits pro-caspase-1 (proCASP1) independently of PYCARD/ASC. Interacts (via CARD domain) with CASP1 (via CARD domain); leading to CASP1 activation. Post-translationally, autocatalytically cleaved. Autocatalytic cleavage in FIIND region occurs constitutively, prior to activation signals, and is required for inflammasome activity (IL1B release), possibly by facilitating CASP1 binding. Both N- and C-terminal parts remain associated non-covalently. (Microbial infection) Cleavage by B.anthracis lethal toxin (LT) endopeptidase promotes ubiquitination and degradation of the N-terminal part, releasing the cleaved C-terminal part of the protein (NACHT, LRR and PYD domains-containing protein 1a, C-terminus), which polymerizes and forms the Nlrp1a inflammasome. In terms of processing, ubiquitinated in response to pathogen-associated signals, leading to its degradation by the proteasome and subsequent release of the cleaved C-terminal part of the protein (NACHT, LRR and PYD domains-containing protein 1a, C-terminus), which polymerizes and forms the Nlrp1a inflammasome.

The protein resides in the cytoplasm. Its subcellular location is the cytosol. It is found in the nucleus. It localises to the inflammasome. With respect to regulation, activated by cleavage by B.anthracis lethal toxin (LT) endopeptidase. Cleavage by LT promotes ubiquitination and degradation of the N-terminal part, releasing the cleaved C-terminal part of the protein (NACHT, LRR and PYD domains-containing protein 1a, C-terminus), which polymerizes and forms the Nlrp1a inflammasome. Nlrp1a inflammasome is inhibited by DPP8 and DPP9, which sequester the C-terminal fragment of Nlrp1a (NACHT, LRR and PYD domains-containing protein 1a, C-terminus) in a ternary complex, thereby preventing Nlrp1a oligomerization and activation. Nlrp1a inflammasome is weakly activated by Val-boroPro (Talabostat, PT-100), an inhibitor of dipeptidyl peptidases DPP8 and DPP9. Val-boroPro relieves inhibition of DPP8 and/or DPP9 by promoting disruption of the ternary complex, releasing its C-terminal part from autoinhibition. Weakly activated by Toxoplasma gondii. Acts as the sensor component of the Nlrp1a inflammasome, which mediates inflammasome activation in response to various pathogen-associated signals, leading to subsequent pyroptosis. Inflammasomes are supramolecular complexes that assemble in the cytosol in response to pathogens and other damage-associated signals and play critical roles in innate immunity and inflammation. Acts as a recognition receptor (PRR): recognizes specific pathogens and other damage-associated signals, such as B.anthracis lethal toxin (LT) or Val-boroPro inhibitor, and mediates the formation of the inflammasome polymeric complex. In response to pathogen-associated signals, the N-terminal part of Nlrp1a is degraded by the proteasome, releasing the cleaved C-terminal part of the protein (NACHT, LRR and PYD domains-containing protein 1a, C-terminus), which polymerizes to initiate the formation of the inflammasome complex: the inflammasome directly recruits pro-caspase-1 (proCASP1) independently of PYCARD/ASC and promotes caspase-1 (CASP1) activation, which subsequently cleaves and activates inflammatory cytokines IL1B and IL18 and gasdermin-D (GSDMD), leading to pyroptosis. In the absence of GSDMD expression, the Nlrp1a inflammasome is able to recruit and activate CASP8, leading to activation of gasdermin-E (GSDME). Its function is as follows. Constitutes the precursor of the Nlrp1a inflammasome, which mediates autoproteolytic processing within the FIIND domain to generate the N-terminal and C-terminal parts, which are associated non-covalently in absence of pathogens and other damage-associated signals. Functionally, regulatory part that prevents formation of the Nlrp1a inflammasome: in absence of pathogens and other damage-associated signals, interacts with the C-terminal part of Nlrp1a (NACHT, LRR and PYD domains-containing protein 1a, C-terminus), preventing activation of the Nlrp1a inflammasome. In response to pathogen-associated signals, this part is ubiquitinated by the N-end rule pathway and degraded by the proteasome, releasing the cleaved C-terminal part of the protein, which polymerizes and forms the Nlrp1a inflammasome. In terms of biological role, constitutes the active part of the Nlrp1a inflammasome. In absence of pathogens and other damage-associated signals, interacts with the N-terminal part of Nlrp1a (NACHT, LRR and PYD domains-containing protein 1a, N-terminus), preventing activation of the Nlrp1a inflammasome. In response to pathogen-associated signals, the N-terminal part of Nlrp1a is degraded by the proteasome, releasing this form, which polymerizes to form the Nlrp1a inflammasome complex: the Nlrp1a inflammasome complex then directly recruits pro-caspase-1 (proCASP1) and promotes caspase-1 (CASP1) activation, leading to gasdermin-D (GSDMD) cleavage and subsequent pyroptosis. This Rattus norvegicus (Rat) protein is NACHT, LRR and PYD domains-containing protein 1a allele 1.